Here is a 327-residue protein sequence, read N- to C-terminus: Glycerol-3-phosphate dehydrogenase [NAD(P)+] (327 aa).

The NADPH site is built by phenylalanine 13, arginine 34, and lysine 107. Lysine 107 and glycine 135 together coordinate sn-glycerol 3-phosphate. Residue alanine 139 participates in NADPH binding. Sn-glycerol 3-phosphate is bound by residues lysine 190, aspartate 243, serine 253, arginine 254, and asparagine 255. The Proton acceptor role is filled by lysine 190. An NADPH-binding site is contributed by arginine 254. Residues valine 276 and glutamate 277 each contribute to the NADPH site.

This sequence belongs to the NAD-dependent glycerol-3-phosphate dehydrogenase family.

It localises to the cytoplasm. It catalyses the reaction sn-glycerol 3-phosphate + NAD(+) = dihydroxyacetone phosphate + NADH + H(+). It carries out the reaction sn-glycerol 3-phosphate + NADP(+) = dihydroxyacetone phosphate + NADPH + H(+). The protein operates within membrane lipid metabolism; glycerophospholipid metabolism. Catalyzes the reduction of the glycolytic intermediate dihydroxyacetone phosphate (DHAP) to sn-glycerol 3-phosphate (G3P), the key precursor for phospholipid synthesis. In Rhizobium etli (strain CIAT 652), this protein is Glycerol-3-phosphate dehydrogenase [NAD(P)+].